Here is a 261-residue protein sequence, read N- to C-terminus: Cytochrome c oxidase subunit 3 (261 aa).

The Mitochondrial matrix portion of the chain corresponds to Met-1–Pro-15. The chain crosses the membrane as a helical span at residues Trp-16–Trp-34. Residues Phe-35–Thr-40 are Mitochondrial intermembrane-facing. The chain crosses the membrane as a helical span at residues Ile-41–Thr-66. The Mitochondrial matrix segment spans residues Phe-67 to Thr-72. The chain crosses the membrane as a helical span at residues Pro-73 to Ser-105. The Mitochondrial intermembrane segment spans residues Leu-106–Glu-128. Residues Val-129–Met-152 form a helical membrane-spanning segment. The Mitochondrial matrix portion of the chain corresponds to Glu-153–Asn-155. The helical transmembrane segment at Arg-156–Glu-183 threads the bilayer. Topologically, residues Ala-184–Asp-190 are mitochondrial intermembrane. Residues Gly-191 to Leu-223 form a helical membrane-spanning segment. Residues Lys-224 to His-232 lie on the Mitochondrial matrix side of the membrane. The helical transmembrane segment at Phe-233 to Ile-256 threads the bilayer. Over Tyr-257 to Ser-261 the chain is Mitochondrial intermembrane.

It belongs to the cytochrome c oxidase subunit 3 family. Component of the cytochrome c oxidase (complex IV, CIV), a multisubunit enzyme composed of 14 subunits. The complex is composed of a catalytic core of 3 subunits MT-CO1, MT-CO2 and MT-CO3, encoded in the mitochondrial DNA, and 11 supernumerary subunits COX4I, COX5A, COX5B, COX6A, COX6B, COX6C, COX7A, COX7B, COX7C, COX8 and NDUFA4, which are encoded in the nuclear genome. The complex exists as a monomer or a dimer and forms supercomplexes (SCs) in the inner mitochondrial membrane with NADH-ubiquinone oxidoreductase (complex I, CI) and ubiquinol-cytochrome c oxidoreductase (cytochrome b-c1 complex, complex III, CIII), resulting in different assemblies (supercomplex SCI(1)III(2)IV(1) and megacomplex MCI(2)III(2)IV(2)).

The protein resides in the mitochondrion inner membrane. The catalysed reaction is 4 Fe(II)-[cytochrome c] + O2 + 8 H(+)(in) = 4 Fe(III)-[cytochrome c] + 2 H2O + 4 H(+)(out). Its function is as follows. Component of the cytochrome c oxidase, the last enzyme in the mitochondrial electron transport chain which drives oxidative phosphorylation. The respiratory chain contains 3 multisubunit complexes succinate dehydrogenase (complex II, CII), ubiquinol-cytochrome c oxidoreductase (cytochrome b-c1 complex, complex III, CIII) and cytochrome c oxidase (complex IV, CIV), that cooperate to transfer electrons derived from NADH and succinate to molecular oxygen, creating an electrochemical gradient over the inner membrane that drives transmembrane transport and the ATP synthase. Cytochrome c oxidase is the component of the respiratory chain that catalyzes the reduction of oxygen to water. Electrons originating from reduced cytochrome c in the intermembrane space (IMS) are transferred via the dinuclear copper A center (CU(A)) of subunit 2 and heme A of subunit 1 to the active site in subunit 1, a binuclear center (BNC) formed by heme A3 and copper B (CU(B)). The BNC reduces molecular oxygen to 2 water molecules using 4 electrons from cytochrome c in the IMS and 4 protons from the mitochondrial matrix. This Aepyceros melampus (Impala) protein is Cytochrome c oxidase subunit 3 (MT-CO3).